A 105-amino-acid chain; its full sequence is Nucleoid-associated protein MW0434 (105 aa).

A disordered region spans residues 1-33; it reads MRGGGNMQQMMKQMQKMQKKMAQEQEKLKEERI. Residues 7–16 are compositionally biased toward low complexity; it reads MQQMMKQMQK. The span at 21-33 shows a compositional bias: basic and acidic residues; sequence MAQEQEKLKEERI.

It belongs to the YbaB/EbfC family. As to quaternary structure, homodimer.

Its subcellular location is the cytoplasm. The protein localises to the nucleoid. Its function is as follows. Binds to DNA and alters its conformation. May be involved in regulation of gene expression, nucleoid organization and DNA protection. The protein is Nucleoid-associated protein MW0434 of Staphylococcus aureus (strain MW2).